The sequence spans 314 residues: Inactive protein FRIGIDA (314 aa).

Over residues 1 to 18 the composition is skewed to low complexity; it reads MSNYPPTVAAQPTTTANP. The segment at 1-31 is disordered; sequence MSNYPPTVAAQPTTTANPLLQRHQSEQRRRE. Positions 67–97 form a coiled coil; sequence VAVETFKRQFDDLQKHIESIENAIDSKLESN.

Belongs to the Frigida family.

The protein localises to the nucleus. The sequence is that of Inactive protein FRIGIDA (FRI) from Arabidopsis thaliana (Mouse-ear cress).